Consider the following 251-residue polypeptide: Prolactin-7C1 (251 aa).

Residues 1-30 form the signal peptide; that stretch reads MLLSLTHPSFLAMLPMLLMSNLLQWEGVTS. A glycan (N-linked (GlcNAc...) asparagine) is linked at N57. 2 disulfide bridges follow: C101–C217 and C234–C242.

This sequence belongs to the somatotropin/prolactin family. As to expression, expressed exclusively in the placenta. Expressed in spongiotrophoblast cells and trophoblast giant cells of the junctional zone and in labyrinthine trophoblast.

The protein localises to the secreted. The chain is Prolactin-7C1 (Prl7c1) from Mus musculus (Mouse).